The primary structure comprises 434 residues: A-adding tRNA nucleotidyltransferase (434 aa).

20-23 (GAVR) lines the ATP pocket. 2 residues coordinate Mg(2+): D33 and D35. ATP-binding positions include 91 to 92 (RD), N96, 132 to 141 (DPLRAWRAAR), and R177. In terms of domain architecture, HD spans 227-339 (VFEHGVEALH…ELLPDLLSLM (113 aa)).

This sequence belongs to the tRNA nucleotidyltransferase/poly(A) polymerase family. Mg(2+) serves as cofactor.

The catalysed reaction is a tRNA with a 3' CC end + ATP = a tRNA with a 3' CCA end + diphosphate. Functionally, tRNA nucleotidyltransferase involved in the synthesis of the tRNA CCA terminus. Adds the terminal adenosine residue to tRNA. In Deinococcus radiodurans (strain ATCC 13939 / DSM 20539 / JCM 16871 / CCUG 27074 / LMG 4051 / NBRC 15346 / NCIMB 9279 / VKM B-1422 / R1), this protein is A-adding tRNA nucleotidyltransferase.